The sequence spans 136 residues: Histone H3.2 (136 aa).

The tract at residues 1–43 is disordered; it reads MARTKQTARKSTGGKAPRKQLATKAARKSAPATGGVKKPHRFR. K5 carries the N6-methylated lysine modification. Residue K10 is modified to N6-acetyllysine; alternate. K10 carries the N6-methylated lysine; alternate modification. The residue at position 11 (S11) is a Phosphoserine. Position 12 is a phosphothreonine (T12). The residue at position 15 (K15) is an N6-acetyllysine. K19 and K24 each carry N6-acetyllysine; alternate. N6-methylated lysine; alternate occurs at positions 19 and 24. N6-methylated lysine is present on K28. A Phosphoserine modification is found at S29. At K37 the chain carries N6-methylated lysine.

Belongs to the histone H3 family. As to quaternary structure, the nucleosome is a histone octamer containing two molecules each of H2A, H2B, H3 and H4 assembled in one H3-H4 heterotetramer and two H2A-H2B heterodimers. The octamer wraps approximately 147 bp of DNA. In terms of processing, acetylation is generally linked to gene activation. Can be acetylated to form H3K9ac, H3K14ac, H3K18ac and H3K23ac. H3K9ac could compete with H3K9me and prevent gene silencing. H3K9ac is restricted to euchromatin. Methylated to form mainly H3K4me, H3K9me, H3K18me, H3K23me, H3K27me and H3K36me. H3K4me1/2/3, H3K9me3, H3K27me3 and H3K36me1/2/3 are typical marks for euchromatin, whereas heterochromatic chromocenters are enriched in H3K9me1/2 and H3K27me1/2. H2BK143ub1 is probably prerequisite for H3K4me. Post-translationally, can be phosphorylated to form H3S10ph, H3T11ph and H3S28ph.

The protein resides in the nucleus. It localises to the chromosome. Core component of nucleosome. Nucleosomes wrap and compact DNA into chromatin, limiting DNA accessibility to the cellular machineries which require DNA as a template. Histones thereby play a central role in transcription regulation, DNA repair, DNA replication and chromosomal stability. DNA accessibility is regulated via a complex set of post-translational modifications of histones, also called histone code, and nucleosome remodeling. This is Histone H3.2 from Triticum aestivum (Wheat).